A 152-amino-acid polypeptide reads, in one-letter code: D-aminoacyl-tRNA deacylase 1 (152 aa).

The Gly-cisPro motif, important for rejection of L-amino acids motif lies at 140-141; it reads GP.

The protein belongs to the DTD family. Homodimer.

Its subcellular location is the cytoplasm. The catalysed reaction is glycyl-tRNA(Ala) + H2O = tRNA(Ala) + glycine + H(+). The enzyme catalyses a D-aminoacyl-tRNA + H2O = a tRNA + a D-alpha-amino acid + H(+). Functionally, an aminoacyl-tRNA editing enzyme that deacylates mischarged D-aminoacyl-tRNAs. Hydrolyzes correctly charged, achiral, glycyl-tRNA(Gly). Deacylates mischarged D.melanogaster and E.coli glycyl-tRNA(Ala), protecting cells against glycine mischarging by AlaRS. Acts via tRNA-based rather than protein-based catalysis; rejects L-amino acids rather than detecting D-amino acids in the active site. By recycling D-aminoacyl-tRNA to D-amino acids and free tRNA molecules, this enzyme counteracts the toxicity associated with the formation of D-aminoacyl-tRNA entities in vivo and helps enforce protein L-homochirality. This Leishmania major protein is D-aminoacyl-tRNA deacylase 1 (dtd1).